The sequence spans 341 residues: Phosphate acyltransferase (341 aa).

Belongs to the PlsX family. As to quaternary structure, homodimer. Probably interacts with PlsY.

Its subcellular location is the cytoplasm. The catalysed reaction is a fatty acyl-[ACP] + phosphate = an acyl phosphate + holo-[ACP]. Its pathway is lipid metabolism; phospholipid metabolism. Catalyzes the reversible formation of acyl-phosphate (acyl-PO(4)) from acyl-[acyl-carrier-protein] (acyl-ACP). This enzyme utilizes acyl-ACP as fatty acyl donor, but not acyl-CoA. The protein is Phosphate acyltransferase of Lacticaseibacillus casei (strain BL23) (Lactobacillus casei).